The chain runs to 733 residues: Serine/threonine-protein kinase ATG1c (733 aa).

Residues 12-269 (YLVGRQIGSG…FEEFFNHPFL (258 aa)) form the Protein kinase domain. Residues 18–26 (IGSGSFSVV) and Lys41 contribute to the ATP site. The active-site Proton acceptor is Asp134. 2 disordered regions span residues 292 to 363 (SSGS…ELTS) and 379 to 414 (FETQ…SQDS). The segment covering 329 to 339 (KKTSSMKSSSG) has biased composition (polar residues). Basic and acidic residues-rich tracts occupy residues 342 to 360 (VDTR…KHTE) and 379 to 393 (FETQ…RREP). Positions 419–422 (FVLV) match the AIM (Atg8-family-interacting motif) motif. Disordered stretches follow at residues 565 to 596 (GSPS…SHDG) and 713 to 733 (HRRS…NRQS). Residues 566–577 (SPSQDINKLRSS) are compositionally biased toward polar residues. The segment covering 579–596 (LKHDTHSSNKVTDLSHDG) has biased composition (basic and acidic residues). Residues 717–733 (SAGQMQGSSLAMMNRQS) are compositionally biased toward polar residues.

It belongs to the protein kinase superfamily. Ser/Thr protein kinase family.

It localises to the cytoplasmic vesicle. It is found in the autophagosome. Its function is as follows. Serine/threonine protein kinase involved in autophagy. The ATG1-ATG13 protein kinase complex regulates downstream events required for autophagosome enclosure and/or vacuolar delivery. The polypeptide is Serine/threonine-protein kinase ATG1c (Arabidopsis thaliana (Mouse-ear cress)).